Consider the following 248-residue polypeptide: 3-deoxy-manno-octulosonate cytidylyltransferase (248 aa).

It belongs to the KdsB family.

Its subcellular location is the cytoplasm. The catalysed reaction is 3-deoxy-alpha-D-manno-oct-2-ulosonate + CTP = CMP-3-deoxy-beta-D-manno-octulosonate + diphosphate. It participates in nucleotide-sugar biosynthesis; CMP-3-deoxy-D-manno-octulosonate biosynthesis; CMP-3-deoxy-D-manno-octulosonate from 3-deoxy-D-manno-octulosonate and CTP: step 1/1. Its pathway is bacterial outer membrane biogenesis; lipopolysaccharide biosynthesis. In terms of biological role, activates KDO (a required 8-carbon sugar) for incorporation into bacterial lipopolysaccharide in Gram-negative bacteria. The sequence is that of 3-deoxy-manno-octulosonate cytidylyltransferase from Salmonella enteritidis PT4 (strain P125109).